Here is a 421-residue protein sequence, read N- to C-terminus: Lipid II:glycine glycyltransferase (421 aa).

This sequence belongs to the FemABX family. In terms of assembly, monomer.

The protein resides in the cytoplasm. It carries out the reaction beta-D-GlcNAc-(1-&gt;4)-Mur2Ac(oyl-L-Ala-D-isoglutaminyl-L-Lys-D-Ala-D-Ala)-di-trans,octa-cis-undecaprenyl diphosphate + glycyl-tRNA(Gly) = beta-D-GlcNAc-(1-&gt;4)-Mur2Ac(oyl-L-Ala-D-isoglutaminyl-L-Lys-(N(6)-Gly)-D-Ala-D-Ala)-di-trans,octa-cis-undecaprenyl diphosphate + tRNA(Gly) + H(+). Catalyzes the incorporation of the first glycine of the pentaglycine interpeptide bridge, which is characteristic of the S.aureus peptidoglycan. This glycine is added to the epsilon-amino group of the L-lysine of the membrane-bound lipid II intermediate (GlcNAc-(beta-1,4)-N-acetylmuramic acid(-L-Ala-D-iGln-L-Lys-D-Ala-D-Ala)-pyrophosphoryl-undecaprenol), using glycyl-tRNA(Gly) as donor, in a ribosome-independent mechanism. This is Lipid II:glycine glycyltransferase (femX) from Staphylococcus aureus (strain MSSA476).